A 151-amino-acid chain; its full sequence is Secreted RxLR effector protein 30 (151 aa).

A signal peptide spans 1–19; that stretch reads MRSSTILIVLGIAILAVNG. Residues 38-53 carry the RxLR-dEER motif; it reads RLLRSTSTEHETDEER.

Belongs to the RxLR effector family.

Its subcellular location is the secreted. It localises to the host nucleus. Its function is as follows. Effector that acts as a broad suppressor of cell death to interrupt plant immunity. Inhibits cell death induced by cell death-inducing proteins, including the PAMP elicitor INF1 from P.infestans. In Plasmopara viticola (Downy mildew of grapevine), this protein is Secreted RxLR effector protein 30.